Here is a 118-residue protein sequence, read N- to C-terminus: Basic phospholipase A2 4 (118 aa).

7 disulfide bridges follow: Cys11–Cys71, Cys27–Cys117, Cys29–Cys45, Cys44–Cys98, Cys51–Cys91, Cys60–Cys84, and Cys78–Cys89. Positions 28, 30, and 32 each coordinate Ca(2+). His48 is an active-site residue. Position 49 (Asp49) interacts with Ca(2+). Asp92 is a catalytic residue.

The protein belongs to the phospholipase A2 family. Group I subfamily. D49 sub-subfamily. Monomer. Ca(2+) is required as a cofactor. In terms of tissue distribution, expressed by the venom gland.

The protein resides in the secreted. It catalyses the reaction a 1,2-diacyl-sn-glycero-3-phosphocholine + H2O = a 1-acyl-sn-glycero-3-phosphocholine + a fatty acid + H(+). Functionally, PLA2 catalyzes the calcium-dependent hydrolysis of the 2-acyl groups in 3-sn-phosphoglycerides. This is Basic phospholipase A2 4 from Laticauda semifasciata (Black-banded sea krait).